We begin with the raw amino-acid sequence, 82 residues long: Sulfur carrier protein TusA (82 aa).

Cys19 serves as the catalytic Cysteine persulfide intermediate.

Belongs to the sulfur carrier protein TusA family. As to quaternary structure, interacts with IscS.

The protein resides in the cytoplasm. The protein operates within tRNA modification. Functionally, sulfur carrier protein involved in sulfur trafficking in the cell. Part of a sulfur-relay system required for 2-thiolation during synthesis of 2-thiouridine of the modified wobble base 5-methylaminomethyl-2-thiouridine (mnm(5)s(2)U) in tRNA. Interacts with IscS and stimulates its cysteine desulfurase activity. Accepts an activated sulfur from IscS, which is then transferred to TusD, and thus determines the direction of sulfur flow from IscS to 2-thiouridine formation. Also appears to be involved in sulfur transfer for the biosynthesis of molybdopterin. This chain is Sulfur carrier protein TusA, found in Edwardsiella ictaluri (strain 93-146).